The following is a 295-amino-acid chain: Trehalose/maltose transport system permease protein MalF (295 aa).

Helical transmembrane passes span 16–36 (LGYL…ILPV), 79–99 (VSFS…FALI), 112–132 (AIVL…WELM), 146–166 (ILGV…FAIV), 210–230 (ITLP…TIDA), 236–256 (IIYV…SLLA), and 267–287 (IGSA…IVYL). Residues 75–286 (TFVTVSFSFV…VLVLSFTIVY (212 aa)) form the ABC transmembrane type-1 domain.

The protein belongs to the binding-protein-dependent transport system permease family. In terms of assembly, the complex is composed of two ATP-binding proteins (MalK), two transmembrane proteins (MalG and MalF) and a solute-binding protein (MalE).

Its subcellular location is the cell membrane. In terms of biological role, part of the ABC transporter complex MalEFGK involved in trehalose/maltose import. Responsible for the translocation of the substrate across the membrane. In Thermococcus litoralis (strain ATCC 51850 / DSM 5473 / JCM 8560 / NS-C), this protein is Trehalose/maltose transport system permease protein MalF (malF).